We begin with the raw amino-acid sequence, 338 residues long: Lipoate-protein ligase A (338 aa).

Positions 29–216 (PATQRVLFLW…AFFAHYGERV (188 aa)) constitute a BPL/LPL catalytic domain. ATP contacts are provided by residues arginine 71, 76 to 79 (GAVF), and lysine 134. Lysine 134 contributes to the (R)-lipoate binding site.

Belongs to the LplA family. Monomer.

The protein localises to the cytoplasm. It carries out the reaction L-lysyl-[lipoyl-carrier protein] + (R)-lipoate + ATP = N(6)-[(R)-lipoyl]-L-lysyl-[lipoyl-carrier protein] + AMP + diphosphate + H(+). It participates in protein modification; protein lipoylation via exogenous pathway; protein N(6)-(lipoyl)lysine from lipoate: step 1/2. It functions in the pathway protein modification; protein lipoylation via exogenous pathway; protein N(6)-(lipoyl)lysine from lipoate: step 2/2. In terms of biological role, catalyzes both the ATP-dependent activation of exogenously supplied lipoate to lipoyl-AMP and the transfer of the activated lipoyl onto the lipoyl domains of lipoate-dependent enzymes. The polypeptide is Lipoate-protein ligase A (Salmonella dublin (strain CT_02021853)).